The sequence spans 500 residues: Glycerol kinase (500 aa).

Threonine 16 is an ADP binding site. The ATP site is built by threonine 16 and threonine 17. Position 16 (threonine 16) interacts with sn-glycerol 3-phosphate. Arginine 20 contributes to the ADP binding site. Arginine 86, glutamate 87, tyrosine 138, and aspartate 243 together coordinate sn-glycerol 3-phosphate. Glycerol is bound by residues arginine 86, glutamate 87, tyrosine 138, aspartate 243, and glutamine 244. 2 residues coordinate ADP: threonine 265 and glycine 313. Positions 265, 313, 317, and 414 each coordinate ATP. Residues glycine 414 and asparagine 418 each coordinate ADP.

The protein belongs to the FGGY kinase family.

The catalysed reaction is glycerol + ATP = sn-glycerol 3-phosphate + ADP + H(+). It functions in the pathway polyol metabolism; glycerol degradation via glycerol kinase pathway; sn-glycerol 3-phosphate from glycerol: step 1/1. Its activity is regulated as follows. Inhibited by fructose 1,6-bisphosphate (FBP). Functionally, key enzyme in the regulation of glycerol uptake and metabolism. Catalyzes the phosphorylation of glycerol to yield sn-glycerol 3-phosphate. In Nostoc sp. (strain PCC 7120 / SAG 25.82 / UTEX 2576), this protein is Glycerol kinase.